Consider the following 150-residue polypeptide: UPF0178 protein Bcen2424_1660 (150 aa).

Belongs to the UPF0178 family.

The sequence is that of UPF0178 protein Bcen2424_1660 from Burkholderia cenocepacia (strain HI2424).